Consider the following 932-residue polypeptide: Glycine dehydrogenase (decarboxylating) (932 aa).

At lysine 685 the chain carries N6-(pyridoxal phosphate)lysine.

Belongs to the GcvP family. In terms of assembly, the glycine cleavage system is composed of four proteins: P, T, L and H. Pyridoxal 5'-phosphate serves as cofactor.

The enzyme catalyses N(6)-[(R)-lipoyl]-L-lysyl-[glycine-cleavage complex H protein] + glycine + H(+) = N(6)-[(R)-S(8)-aminomethyldihydrolipoyl]-L-lysyl-[glycine-cleavage complex H protein] + CO2. Its function is as follows. The glycine cleavage system catalyzes the degradation of glycine. The P protein binds the alpha-amino group of glycine through its pyridoxal phosphate cofactor; CO(2) is released and the remaining methylamine moiety is then transferred to the lipoamide cofactor of the H protein. This Brucella canis (strain ATCC 23365 / NCTC 10854 / RM-666) protein is Glycine dehydrogenase (decarboxylating).